Consider the following 919-residue polypeptide: TRPM8 channel-associated factor 2 (919 aa).

In terms of domain architecture, Peptidase M60 spans 542 to 841 (DCWVSTGLYL…TYLQLQEAFG (300 aa)).

It belongs to the TCAF family. As to quaternary structure, isoform 2 interacts with TRPM8 (via N-terminus and C-terminus domains); the interaction inhibits TRPM8 channel activity. Interacts with TRPV6. As to expression, isoform 2 is expressed in the prostate and in cancerous prostate samples.

It is found in the cell membrane. In terms of biological role, negatively regulates the plasma membrane cation channel TRPM8 activity. Involved in the recruitment of TRPM8 to the cell surface. Promotes prostate cancer cell migration stimulation in a TRPM8-dependent manner. In Homo sapiens (Human), this protein is TRPM8 channel-associated factor 2.